The primary structure comprises 134 residues: Bet1-like protein At1g29060 (134 aa).

Over residues 1 to 12 (MASNRGAGGSLY) the composition is skewed to gly residues. The interval 1-31 (MASNRGAGGSLYGGADPYRSREGLSTRNASG) is disordered. Residues 1 to 110 (MASNRGAGGS…LSIIRSGNNH (110 aa)) are Cytoplasmic-facing. A t-SNARE coiled-coil homology domain is found at 40 to 102 (DPMHSDLDDE…KNNIRKLNLS (63 aa)). Residues 111–131 (IMHVVLFALLLFFILYMWSKM) traverse the membrane as a helical; Anchor for type IV membrane protein segment. The Vesicular portion of the chain corresponds to 132 to 134 (FKR).

This sequence belongs to the BET1 family.

The protein resides in the golgi apparatus membrane. Its subcellular location is the endoplasmic reticulum membrane. Required for vesicular transport from the ER to the Golgi complex. Functions as a SNARE associated with ER-derived vesicles. The chain is Bet1-like protein At1g29060 from Arabidopsis thaliana (Mouse-ear cress).